The following is a 242-amino-acid chain: Lysosomal membrane ascorbate-dependent ferrireductase CYB561A3 (242 aa).

At 1–4 (MASG) the chain is on the cytoplasmic side. The helical transmembrane segment at 5-25 (WFYLSCMVLGSLGSMCILFTA) threads the bilayer. The region spanning 12-219 (VLGSLGSMCI…FGLLVLYVLL (208 aa)) is the Cytochrome b561 domain. Over 26–40 (YWMQYWRGGFAWDGT) the chain is Lumenal. Residues 41-61 (VLMFNWHPVLMVAGMVVLYGA) traverse the membrane as a helical segment. Heme b-binding residues include His-47 and Arg-67. Residues 62–81 (ASLVYRLPSSWVGPRLPWKV) are Cytoplasmic-facing. Arg-76 and Lys-80 together coordinate L-ascorbate. Residues 82–102 (LHAALHLLAFTCTVVGLIAVF) form a helical membrane-spanning segment. Residues His-83, 112 to 115 (HLYS), and His-117 each bind heme b. The Lumenal segment spans residues 103-119 (RFHNHSRIAHLYSLHSW). Residues 120-140 (LGITTVVLFACQWFLGFAVFL) traverse the membrane as a helical segment. At 141 to 154 (LPWASQWLRSLLKP) the chain is on the cytoplasmic side. Arg-149 lines the L-ascorbate pocket. Residues 155–175 (LHVFFGACILSLSITSVISGI) form a helical membrane-spanning segment. Heme b-binding residues include His-156 and Glu-177. Residues 176–202 (NEKLFFVLKNATKPYSSLPGEAVFANS) lie on the Lumenal side of the membrane. Residues 203–223 (TGLLVVAFGLLVLYVLLASSW) traverse the membrane as a helical segment. Residue Lys-224 coordinates heme b. The Cytoplasmic segment spans residues 224–242 (KRPDPGALTDRQPLLHDRE).

In terms of assembly, homodimer. It depends on heme b as a cofactor. Post-translationally, N-glycosylated. In terms of tissue distribution, present in lung, spleen, thymus and testis. Present at low level in brain, heart, liver and kidney. Expressed in the alveolar macrophages of the lung, in the white pulp of the spleen, widespread in the thymus, and in the Sertoli cells of the testis (at protein level).

It localises to the late endosome membrane. Its subcellular location is the lysosome membrane. It catalyses the reaction Fe(3+)(out) + L-ascorbate(in) = monodehydro-L-ascorbate radical(in) + Fe(2+)(out) + H(+). Transmembrane reductase that uses ascorbate as an electron donor in the cytoplasm and transfers electrons across membranes to reduce iron cations Fe(3+) into Fe(2+) in the lumen of the late endosome and lysosome. Reduced iron can then be extruded from the late endosome and lysosome to the cytoplasm by divalent metal-specific transporters. It is therefore most probably involved in endosomal and lysosomal cellular iron homeostasis. The protein is Lysosomal membrane ascorbate-dependent ferrireductase CYB561A3 of Mus musculus (Mouse).